We begin with the raw amino-acid sequence, 438 residues long: MENDMETATMTQDYHIANINLADWGRKEIEIAETEMPGLMALRKKYKNAKPLKGARIAGCIHMTIQTAVLIETLMLLGAEVRWSSCNIFSTQDHAAAALAQKGIPIFAWKGETEEEYWRCIASTLEGPKGWTPNLLLDDGGDLTAHTLQKHPELCQNIRGVSEETTTGVHRLYRMLKEGSLKFPAINVNDSVTKSKFDNLYGCRESLIDSIKRATDVMIAGKRVVVCGYGDVGKGCAQSLRAYGATVYITEIDPICALQAAMEGYRVVTMDEMADSADIFVTATGNTDIITHEHMLKMKDQAIVCNIGHFDNEIDIASLQDYQWMNIKPQVDQVIFPDGKRLMVLAQGRLVNLGCATGHPSFVMSNSFTNQVLAQIELWQYPEKYPIGVYVLPKHLDEEVARLHLERVGAKLTTLTEKQADYIGVDPEGPFKSEHYRY.

Substrate is bound by residues threonine 64, aspartate 139, and glutamate 164. 165–167 (TTT) is an NAD(+) binding site. Substrate contacts are provided by lysine 194 and aspartate 198. Residues asparagine 199, 228–233 (GYGDVG), glutamate 251, asparagine 286, 307–309 (IGH), and asparagine 352 each bind NAD(+).

The protein belongs to the adenosylhomocysteinase family. The cofactor is NAD(+).

The protein resides in the cytoplasm. It carries out the reaction S-adenosyl-L-homocysteine + H2O = L-homocysteine + adenosine. It functions in the pathway amino-acid biosynthesis; L-homocysteine biosynthesis; L-homocysteine from S-adenosyl-L-homocysteine: step 1/1. In terms of biological role, may play a key role in the regulation of the intracellular concentration of adenosylhomocysteine. This chain is Adenosylhomocysteinase, found in Coxiella burnetii (strain CbuK_Q154) (Coxiella burnetii (strain Q154)).